A 98-amino-acid polypeptide reads, in one-letter code: Nuclear protein 2 (98 aa).

Low complexity predominate over residues 1 to 11; that stretch reads MEPAAPTVQPR. Disordered regions lie at residues 1–24 and 78–98; these read MEPAAPTVQPRAQPPPPDVWPPVG and LNSQRKRRQRQLQPRPRTRLT. Positions 81-98 are enriched in basic residues; the sequence is QRKRRQRQLQPRPRTRLT.

This sequence belongs to the NUPR family.

It is found in the nucleus. Its function is as follows. Acts as a transcriptional repressor by inhibiting gene expression at the NUPR1 promoter in a p53/TP53-dependent manner in cancer cells. Involved in the G1 cell cycle arrest, and in a decrease in cell viability and cell proliferation. Plays a role as a negative regulator of the protumoral factor NUPR1. The sequence is that of Nuclear protein 2 from Bos taurus (Bovine).